Reading from the N-terminus, the 682-residue chain is Potassium-transporting ATPase ATP-binding subunit (682 aa).

4 helical membrane passes run 34–54 (PVMF…LAMV), 58–78 (IAGS…TVLF), 219–239 (IALT…TATL), and 254–274 (VLVA…LSAI). Asp-307 acts as the 4-aspartylphosphate intermediate in catalysis. ATP is bound by residues Asp-344, Glu-348, 377 to 384 (FTAQSRMS), and Lys-395. Mg(2+) is bound by residues Asp-518 and Asp-522. Helical transmembrane passes span 588-608 (FAII…LNVM), 616-636 (AILS…PLAL), and 662-682 (LVVP…LGLA).

The protein belongs to the cation transport ATPase (P-type) (TC 3.A.3) family. Type IA subfamily. The system is composed of three essential subunits: KdpA, KdpB and KdpC.

The protein localises to the cell inner membrane. It catalyses the reaction K(+)(out) + ATP + H2O = K(+)(in) + ADP + phosphate + H(+). Functionally, part of the high-affinity ATP-driven potassium transport (or Kdp) system, which catalyzes the hydrolysis of ATP coupled with the electrogenic transport of potassium into the cytoplasm. This subunit is responsible for energy coupling to the transport system and for the release of the potassium ions to the cytoplasm. The protein is Potassium-transporting ATPase ATP-binding subunit of Salmonella choleraesuis (strain SC-B67).